The following is a 469-amino-acid chain: Gustatory receptor for sugar taste 64f (469 aa).

Residues Met-1–Cys-117 are Cytoplasmic-facing. Residues Phe-118–Leu-138 form a helical membrane-spanning segment. Topologically, residues Asn-139–Ser-146 are extracellular. A helical membrane pass occupies residues Ile-147–Ala-167. Residues Arg-168–Thr-199 are Cytoplasmic-facing. A helical transmembrane segment spans residues Ile-200–Val-220. Residues Ser-221–Asn-265 are Extracellular-facing. Asn-230 is a glycosylation site (N-linked (GlcNAc...) asparagine). A helical membrane pass occupies residues Val-266–Leu-286. The Cytoplasmic portion of the chain corresponds to Ala-287–Ala-330. A helical membrane pass occupies residues Ile-331–Leu-351. At Arg-352 to Ser-353 the chain is on the extracellular side. Residues Leu-354 to Ile-374 traverse the membrane as a helical segment. Residues Gly-375–Lys-435 lie on the Cytoplasmic side of the membrane. The chain crosses the membrane as a helical span at residues Leu-436–Glu-456. Over Asp-457–Ser-469 the chain is Extracellular.

Belongs to the insect chemoreceptor superfamily. Gustatory receptor (GR) family. Gr5a subfamily. Expressed in Gr5a-expressing sugar-sensing cells.

It localises to the cell membrane. Its function is as follows. One of the few identified sugar gustatory receptors identified so far and which promotes the starvation-induced increase of feeding motivation. Required in combination with Gr64a to detect sucrose, maltose, and glucose. The chain is Gustatory receptor for sugar taste 64f (Gr64f) from Drosophila melanogaster (Fruit fly).